A 325-amino-acid polypeptide reads, in one-letter code: Tagatose 1,6-diphosphate aldolase 1 (325 aa).

This sequence belongs to the aldolase LacD family.

It catalyses the reaction D-tagatofuranose 1,6-bisphosphate = D-glyceraldehyde 3-phosphate + dihydroxyacetone phosphate. It functions in the pathway carbohydrate metabolism; D-tagatose 6-phosphate degradation; D-glyceraldehyde 3-phosphate and glycerone phosphate from D-tagatose 6-phosphate: step 2/2. The chain is Tagatose 1,6-diphosphate aldolase 1 (lacD1) from Streptococcus pyogenes serotype M1.